Here is a 414-residue protein sequence, read N- to C-terminus: Esterase FrsA (414 aa).

This sequence belongs to the FrsA family.

It carries out the reaction a carboxylic ester + H2O = an alcohol + a carboxylate + H(+). Functionally, catalyzes the hydrolysis of esters. This is Esterase FrsA from Enterobacter sp. (strain 638).